Consider the following 925-residue polypeptide: Antiviral innate immune response receptor RIG-I (925 aa).

CARD domains follow at residues methionine 1–glutamate 87 and tryptophan 92–lysine 172. Serine 8 bears the (Microbial infection) Phosphoserine mark. The residue at position 8 (serine 8) is a Phosphoserine. Residues lysine 48, lysine 96, lysine 154, and lysine 164 each participate in a glycyl lysine isopeptide (Lys-Gly) (interchain with G-Cter in ubiquitin) cross-link. Threonine 170 is subject to Phosphothreonine. Glycyl lysine isopeptide (Lys-Gly) (interchain with G-Cter in ubiquitin) cross-links involve residues lysine 172, lysine 181, lysine 193, and lysine 203. An interaction with ZC3HAV1 region spans residues glutamate 218–lysine 925. The Helicase ATP-binding domain maps to alanine 251 to leucine 430. Alanine 264–threonine 271 is a binding site for ATP. A DECH box motif is present at residues aspartate 372–histidine 375. Residues asparagine 495 and asparagine 549 each carry the (Microbial infection) Deamidated asparagine; by herpes simplex virus 1/HHV-1 UL37 modification. In terms of domain architecture, Helicase C-terminal spans lysine 610 to phenylalanine 776. The mediates interaction with RNF135 stretch occupies residues glycine 735–lysine 925. The residue at position 770 (threonine 770) is a Phosphothreonine; by CK2. The 132-residue stretch at glutamine 794–lysine 925 folds into the RLR CTR domain. Zn(2+) is bound at residue cysteine 810. Lysine 812 is covalently cross-linked (Glycyl lysine isopeptide (Lys-Gly) (interchain with G-Cter in ubiquitin)). A Zn(2+)-binding site is contributed by cysteine 813. Residues serine 854 and serine 855 each carry the phosphoserine; by CK2 modification. N6-acetyllysine is present on lysine 858. Zn(2+) is bound by residues cysteine 864 and cysteine 869. Lysine 909 carries the N6-acetyllysine modification.

This sequence belongs to the helicase family. RLR subfamily. Monomer; maintained as a monomer in an autoinhibited state. Upon binding of viral RNAs and conformational shift, homooligomerizes and forms filaments on these molecules. Interacts (via tandem CARD domain) with MAVS/IPS1 promoting its filamentation. Interacts with DHX58/LGP2, IKBKE, TBK1 and STING1. Interacts (via CARD domain) with TRIM25 (via SPRY domain). Interacts (double-stranded RNA-bound oligomeric form) with RNF135 (homodimer); involved in RNA length-dependent activation of the RIG-I signaling pathway. Interacts with CYLD. Interacts with NLRC5; blocks the interaction of MAVS/IPS1 to RIGI. Interacts with SRC. Interacts with DDX60. Interacts with isoform 2 of ZC3HAV1 (via zinc-fingers) in an RNA-dependent manner. Interacts (via tandem CARD domain) with SEC14L1; the interaction is direct and impairs the interaction of RIGI with MAVS/IPS1. Interacts with VCP/p97; interaction is direct and allows the recruitment of RNF125 and subsequent ubiquitination and degradation. Interacts with NOP53; may regulate RIGI through USP15-mediated 'Lys-63'-linked deubiquitination. Interacts with SIGLEC10, CBL and PTPN11; within a negative feedback loop leading to RIGI degradation. Interacts with LRRC25. Interacts with ZCCHC3; leading to activation of RIGI. Interacts with RNF123. Interacts with UBE2D3 and UBE2N; E2 ubiquitin ligases involved in RNF135-mediated ubiquitination of RIGI and activation of the RIG-I signaling pathway. Interacts with IFIT3. Interacts with DDX3X. Interacts with RTN3. Interacts with ARL16; this interaction is GTP-dependent and induced upon viral infection; this interaction suppresses the RNA sensing activity of RIGI. Interacts with DHX16; this interaction enhances RIGI-mediated antiviral response. Interacts with IRGM; promoting RIGI degradation. Interacts with IFI6; this interaction inhibits RIGI activation. Interacts with ECSIT; this interaction bridges RIGI to the MAVS complex at the mitochondrion. Interacts with YWHAE; this interaction drives RIGI at the mitochondrion. In terms of assembly, (Microbial infection) Interacts with protein Z of Guanarito virus, Machupo virus, Junin arenavirus and Sabia virus. This interaction disrupts its interaction with MAVS/IPS1, impeding downstream IRF3 and NF-kappa-B activation and resulting in decreased IFN-beta induction. As to quaternary structure, (Microbial infection) Interacts (via CARD domain) with Human respiratory syncytial virus A non-structural protein 2 (NS2) and this interaction disrupts its interaction with MAVS/IPS1, impeding downstream IRF3 activation. (Microbial infection) Interacts with Rotavirus A non-structural protein 1 (NSP1) and this interaction induces down-regulation of RIGI. In terms of assembly, (Microbial infection) Interacts with paramyxoviruses (Sendai virus, Nipah virus, Measles virus and Parainfluenza virus 5) protein V; this interaction inhibits TRIM25-mediated ubiquitination of RIG-I and prevents downstream RIG-I signaling thereby inhibiting the IFN responses. As to quaternary structure, (Microbial infection) Interacts with herpes simplex virus 1 protein US11; this interaction prevents the interaction of MAVS/IPS1 to RIGI. (Microbial infection) Interacts with herpes simplex virus 1 protein UL37; this interaction deaminates RIGI and inhibits its activation. In terms of assembly, (Microbial infection) Interacts with Severe fever with thrombocytopenia virus (SFTSV) NSs; this interaction this interaction sequesters RIGI in NSs-induced cytoplasmic inclusion bodies thereby inhibiting the IFN responses. Phosphorylated in resting cells and dephosphorylated in RNA virus-infected cells. Phosphorylation at Thr-770, Ser-854 and Ser-855 results in inhibition of its activity while dephosphorylation at these sites results in its activation. Post-translationally, ubiquitinated. 'Lys-63' ubiquitination by RNF135, which occurs after RNA-binding and homodimerization, releases the autoinhibition of the CARD domains by the RLR CTR domain, an essential step in the activation of the RIG-I signaling pathway. Lys-172 is the critical site of ubiquitination for MAVS/IPS1 binding and to induce anti-viral signal transduction. Lys-154, Lys-164 and Lys-172 are shared sites for RNF135-mediated and TRIM4-mediated ubiquitination. Also undergoes 'Lys-48' ubiquitination at Lys-181 by RNF125 that leads to proteasomal degradation. 'Lys-48' ubiquitination follows viral infection and is enhanced by 'Lys-63'-linked ubiquitination of the CARD domains that promotes interaction with VCP/p97 and subsequent recruitment of RNF125. Within a negative feedback loop involving SIGLEC10 and PTPN11, 'Lys-48' ubiquitination at Lys-812 by CBL also elicits the proteasomal degradation of RIGI. Deubiquitinated by CYLD, a protease that selectively cleaves 'Lys-63'-linked ubiquitin chains. Also probably deubiquitinated by USP17L2/USP17 that cleaves 'Lys-48'- and 'Lys-63'-linked ubiquitin chains and positively regulates the receptor. Ubiquitinated by TRIM40 via 'Lys-48'-linked ubiquitination; leading to proteasomal degradation. Deubiquitinated by USP27X that cleaves 'Lys-63'-linked ubiquitin chains and inhibits the innate immune receptor activity. Deubiquitinated by USP3 that also cleaves 'Lys-63'-linked ubiquitin chains and inhibits the innate immune receptor activity. Undergoes 'Lys-48'-linked ubiquitination catalyzed by MARCHF5 at Lys-193 and Lys-203, leading to proteasomal degradation. In terms of processing, phosphorylated at Ser-8 and Thr-170; these phosphorylations suppresse the TRIM25-mediated 'Lys-63'-linked ubiquitination of RIG-I and thereby prevents RIG-I downstream signaling. Dephosphorylated by phosphatases PPP1CA/PPP1CC; this step is essential to activate RIGI and initiate downstream signaling. ISGylated. Conjugated to ubiquitin-like protein ISG15 upon IFN-beta stimulation. ISGylation negatively regulates its function in antiviral signaling response. Post-translationally, sumoylated, probably by MUL1; inhibiting its polyubiquitination. In terms of processing, acetylated in response to RNA virus infection. Deacetylated by HDAC6 in the presence of viral mRNAs which is required for detection of viral RNA by RIGI. (Microbial infection) Deamidated on Asn-495 and Asn-549 by herpes simplex virus 1 protein UL37. These modifications eliminate RIGI detection of viral RNA and restriction of viral replication. Post-translationally, degraded via selective autophagy following interaction with IRGM. IRGM promotes RIGI recruitment to autophagosome membranes, promoting its SQSTM1/p62-dependent autophagic degradation. In terms of processing, (Microbial infection) Cleaved by the protease 3C of coxsackievirus B3, poliovirus and enterovirus 71 allowing the virus to disrupt the host type I interferon production. (Microbial infection) Phosphorylated at Ser-8 by herpes simplex virus 1 protein US3 leading to inhibition of critical RIGI activation steps. In terms of tissue distribution, present in vascular smooth cells (at protein level).

The protein resides in the cytoplasm. It localises to the cell projection. Its subcellular location is the ruffle membrane. The protein localises to the cytoskeleton. It is found in the cell junction. The protein resides in the tight junction. It carries out the reaction ATP + H2O = ADP + phosphate + H(+). In terms of biological role, innate immune receptor that senses cytoplasmic viral nucleic acids and activates a downstream signaling cascade leading to the production of type I interferons and pro-inflammatory cytokines. Forms a ribonucleoprotein complex with viral RNAs on which it homooligomerizes to form filaments. The homooligomerization allows the recruitment of RNF135 an E3 ubiquitin-protein ligase that activates and amplifies the RIG-I-mediated antiviral signaling in an RNA length-dependent manner through ubiquitination-dependent and -independent mechanisms. Upon activation, associates with mitochondria antiviral signaling protein (MAVS/IPS1) that activates the IKK-related kinases TBK1 and IKBKE which in turn phosphorylate the interferon regulatory factors IRF3 and IRF7, activating transcription of antiviral immunological genes including the IFN-alpha and IFN-beta interferons. Ligands include 5'-triphosphorylated ssRNAs and dsRNAs but also short dsRNAs (&lt;1 kb in length). In addition to the 5'-triphosphate moiety, blunt-end base pairing at the 5'-end of the RNA is very essential. Overhangs at the non-triphosphorylated end of the dsRNA RNA have no major impact on its activity. A 3'overhang at the 5'triphosphate end decreases and any 5'overhang at the 5' triphosphate end abolishes its activity. Detects both positive and negative strand RNA viruses including members of the families Paramyxoviridae: Human respiratory syncytial virus and measles virus (MeV), Rhabdoviridae: vesicular stomatitis virus (VSV), Orthomyxoviridae: influenza A and B virus, Flaviviridae: Japanese encephalitis virus (JEV), hepatitis C virus (HCV), dengue virus (DENV) and west Nile virus (WNV). It also detects rotaviruses and reoviruses. Detects and binds to SARS-CoV-2 RNAs which is inhibited by m6A RNA modifications. Also involved in antiviral signaling in response to viruses containing a dsDNA genome such as Epstein-Barr virus (EBV). Detects dsRNA produced from non-self dsDNA by RNA polymerase III, such as Epstein-Barr virus-encoded RNAs (EBERs). May play important roles in granulocyte production and differentiation, bacterial phagocytosis and in the regulation of cell migration. The polypeptide is Antiviral innate immune response receptor RIG-I (Homo sapiens (Human)).